We begin with the raw amino-acid sequence, 216 residues long: Ras-related protein Rab11C (216 aa).

19-26 (GDSGVGKS) contributes to the GTP binding site. The Effector region signature appears at 41–49 (SKSTIGVEF). Residues 67 to 71 (DTAGQ) and 125 to 128 (NKSD) each bind GTP. Residues Cys213 and Cys214 are each lipidated (S-geranylgeranyl cysteine).

This sequence belongs to the small GTPase superfamily. Rab family.

It is found in the cell membrane. This Lotus japonicus (Lotus corniculatus var. japonicus) protein is Ras-related protein Rab11C (RAB11C).